A 130-amino-acid polypeptide reads, in one-letter code: Guanylate kinase (130 aa).

The Guanylate kinase-like domain occupies 1-130 (KIFEDPTTSY…EKIQSRVNEA (130 aa)).

Belongs to the guanylate kinase family.

It localises to the cytoplasm. The enzyme catalyses GMP + ATP = GDP + ADP. Its function is as follows. Essential for recycling GMP and indirectly, cGMP. The chain is Guanylate kinase (gmk) from Staphylococcus epidermidis.